The chain runs to 189 residues: Elongation factor P (189 aa).

Lys34 carries the post-translational modification N6-(3,6-diaminohexanoyl)-5-hydroxylysine.

It belongs to the elongation factor P family. Post-translationally, may be beta-lysylated on the epsilon-amino group of Lys-34 by the combined action of EpmA and EpmB, and then hydroxylated on the C5 position of the same residue by EpmC (if this protein is present). Lysylation is critical for the stimulatory effect of EF-P on peptide-bond formation. The lysylation moiety may extend toward the peptidyltransferase center and stabilize the terminal 3-CCA end of the tRNA. Hydroxylation of the C5 position on Lys-34 may allow additional potential stabilizing hydrogen-bond interactions with the P-tRNA.

The protein localises to the cytoplasm. The protein operates within protein biosynthesis; polypeptide chain elongation. Its function is as follows. Involved in peptide bond synthesis. Alleviates ribosome stalling that occurs when 3 or more consecutive Pro residues or the sequence PPG is present in a protein, possibly by augmenting the peptidyl transferase activity of the ribosome. Modification of Lys-34 is required for alleviation. The protein is Elongation factor P of Dichelobacter nodosus (strain VCS1703A).